The chain runs to 217 residues: MMDERRRMVQDLMERGYIKSEAVRRAMERVPREEFVPEDEMHRAYMDMPLPIGEGQTISAPHMVAMIAEILDLEPGMKVLEIGTGCGYNAAVIAEIIGPEGHLYTVERIGILYERARKKLRSLGYDNITVIHGDGSQGFADEAPYSRIYVTAAAPYIPDPLMKQLEIGGKLLIPVGSDKFYQELVLIERTSADDYRSRNLGGVAFVPLIGKHGWKFH.

Ser59 is an active-site residue.

Belongs to the methyltransferase superfamily. L-isoaspartyl/D-aspartyl protein methyltransferase family.

It is found in the cytoplasm. It carries out the reaction [protein]-L-isoaspartate + S-adenosyl-L-methionine = [protein]-L-isoaspartate alpha-methyl ester + S-adenosyl-L-homocysteine. Functionally, catalyzes the methyl esterification of L-isoaspartyl residues in peptides and proteins that result from spontaneous decomposition of normal L-aspartyl and L-asparaginyl residues. It plays a role in the repair and/or degradation of damaged proteins. This is Protein-L-isoaspartate O-methyltransferase (pcm) from Methanothermobacter thermautotrophicus (strain ATCC 29096 / DSM 1053 / JCM 10044 / NBRC 100330 / Delta H) (Methanobacterium thermoautotrophicum).